Reading from the N-terminus, the 223-residue chain is MNKSDALVVFSGGQDSTTCLFWAKKHFRKVYALSFIYGQKHVKEVELARVIAGKAGVEFKAMDVSFIGNLGKNSLTDTTITMDEVKPADSFPNTFVPGRNLFFLSIAAVYARELGINHIVTGVSQTDFSGYPDCRDAFIKSLNVTLNLAMDEQFVLHTPLMWIDKAETWALADELGVLDLIRHETLTCYNGVQGDGCGHCPACKLRREGLEKYLEIKAEREKR.

10–20 (FSGGQDSTTCL) is a binding site for ATP. Positions 188, 197, 200, and 203 each coordinate Zn(2+).

This sequence belongs to the QueC family. Zn(2+) serves as cofactor.

It carries out the reaction 7-carboxy-7-deazaguanine + NH4(+) + ATP = 7-cyano-7-deazaguanine + ADP + phosphate + H2O + H(+). Its pathway is purine metabolism; 7-cyano-7-deazaguanine biosynthesis. Functionally, catalyzes the ATP-dependent conversion of 7-carboxy-7-deazaguanine (CDG) to 7-cyano-7-deazaguanine (preQ(0)). The polypeptide is 7-cyano-7-deazaguanine synthase (Phocaeicola vulgatus (strain ATCC 8482 / DSM 1447 / JCM 5826 / CCUG 4940 / NBRC 14291 / NCTC 11154) (Bacteroides vulgatus)).